Here is a 278-residue protein sequence, read N- to C-terminus: S-adenosylmethionine decarboxylase proenzyme (278 aa).

The interval 96–115 (LTPESLTGESPGPLPGNKPS) is disordered. The Schiff-base intermediate with substrate; via pyruvic acid role is filled by S126. S126 carries the post-translational modification Pyruvic acid (Ser); by autocatalysis. The active-site Proton acceptor; for processing activity is the H131. Residue C154 is the Proton donor; for catalytic activity of the active site.

Belongs to the prokaryotic AdoMetDC family. Type 2 subfamily. In terms of assembly, heterooctamer of four alpha and four beta chains arranged as a tetramer of alpha/beta heterodimers. The cofactor is pyruvate. Post-translationally, is synthesized initially as an inactive proenzyme. Formation of the active enzyme involves a self-maturation process in which the active site pyruvoyl group is generated from an internal serine residue via an autocatalytic post-translational modification. Two non-identical subunits are generated from the proenzyme in this reaction, and the pyruvate is formed at the N-terminus of the alpha chain, which is derived from the carboxyl end of the proenzyme. The post-translation cleavage follows an unusual pathway, termed non-hydrolytic serinolysis, in which the side chain hydroxyl group of the serine supplies its oxygen atom to form the C-terminus of the beta chain, while the remainder of the serine residue undergoes an oxidative deamination to produce ammonia and the pyruvoyl group blocking the N-terminus of the alpha chain.

It carries out the reaction S-adenosyl-L-methionine + H(+) = S-adenosyl 3-(methylsulfanyl)propylamine + CO2. It functions in the pathway amine and polyamine biosynthesis; S-adenosylmethioninamine biosynthesis; S-adenosylmethioninamine from S-adenosyl-L-methionine: step 1/1. In terms of biological role, catalyzes the decarboxylation of S-adenosylmethionine to S-adenosylmethioninamine (dcAdoMet), the propylamine donor required for the synthesis of the polyamines spermine and spermidine from the diamine putrescine. The protein is S-adenosylmethionine decarboxylase proenzyme of Alkaliphilus metalliredigens (strain QYMF).